The following is a 102-amino-acid chain: UPF0235 protein msl4154 (102 aa).

The protein belongs to the UPF0235 family.

The polypeptide is UPF0235 protein msl4154 (Mesorhizobium japonicum (strain LMG 29417 / CECT 9101 / MAFF 303099) (Mesorhizobium loti (strain MAFF 303099))).